Consider the following 286-residue polypeptide: Polyamine aminopropyltransferase (286 aa).

The PABS domain maps to 5–238; that stretch reads TMWHETLHDQ…GIMTFAWATD (234 aa). Gln33 contacts S-methyl-5'-thioadenosine. Residues His64 and Asp88 each contribute to the spermidine site. S-methyl-5'-thioadenosine contacts are provided by residues Glu108 and 140 to 141; that span reads DG. Catalysis depends on Asp158, which acts as the Proton acceptor. 158–161 provides a ligand contact to spermidine; the sequence is DCTD. Pro165 contacts S-methyl-5'-thioadenosine.

This sequence belongs to the spermidine/spermine synthase family. In terms of assembly, homodimer or homotetramer.

The protein resides in the cytoplasm. The catalysed reaction is S-adenosyl 3-(methylsulfanyl)propylamine + putrescine = S-methyl-5'-thioadenosine + spermidine + H(+). It participates in amine and polyamine biosynthesis; spermidine biosynthesis; spermidine from putrescine: step 1/1. Its function is as follows. Catalyzes the irreversible transfer of a propylamine group from the amino donor S-adenosylmethioninamine (decarboxy-AdoMet) to putrescine (1,4-diaminobutane) to yield spermidine. This is Polyamine aminopropyltransferase from Salmonella enteritidis PT4 (strain P125109).